Consider the following 364-residue polypeptide: Fructose-bisphosphate aldolase A (364 aa).

Residue tyrosine 5 is modified to Phosphotyrosine. Threonine 9 is subject to Phosphothreonine. A phosphoserine mark is found at serine 36 and serine 39. The residue at position 42 (lysine 42) is an N6-acetyllysine; alternate. Lysine 42 participates in a covalent cross-link: Glycyl lysine isopeptide (Lys-Gly) (interchain with G-Cter in SUMO1); alternate. Lysine 42 is covalently cross-linked (Glycyl lysine isopeptide (Lys-Gly) (interchain with G-Cter in SUMO2); alternate). Residue arginine 43 coordinates beta-D-fructose 1,6-bisphosphate. Serine 46 carries the post-translational modification Phosphoserine. N6-(2-hydroxyisobutyryl)lysine is present on lysine 99. Lysine 108 carries the post-translational modification N6-acetyllysine. Lysine 111 is modified (N6-acetyllysine; alternate). N6-malonyllysine; alternate is present on lysine 111. Serine 132 is modified (phosphoserine). The residue at position 147 (lysine 147) is an N6-(2-hydroxyisobutyryl)lysine. Residue glutamate 188 is the Proton acceptor of the active site. Residue lysine 230 is the Schiff-base intermediate with dihydroxyacetone-P of the active site. Position 272 is a phosphoserine (serine 272). Beta-D-fructose 1,6-bisphosphate-binding positions include 272–274, serine 301, and arginine 304; that span reads SGG. Lysine 312 is modified (N6-malonyllysine). The residue at position 330 (lysine 330) is an N6-acetyllysine.

The protein belongs to the class I fructose-bisphosphate aldolase family. As to quaternary structure, homotetramer. Interacts with SNX9 and WAS. Interacts with FBP2; the interaction blocks FBP2 inhibition by physiological concentrations of AMP and reduces inhibition by Ca(2+).

It is found in the cytoplasm. The protein resides in the myofibril. The protein localises to the sarcomere. Its subcellular location is the i band. It localises to the m line. It catalyses the reaction beta-D-fructose 1,6-bisphosphate = D-glyceraldehyde 3-phosphate + dihydroxyacetone phosphate. It participates in carbohydrate degradation; glycolysis; D-glyceraldehyde 3-phosphate and glycerone phosphate from D-glucose: step 4/4. Functionally, catalyzes the reversible conversion of beta-D-fructose 1,6-bisphosphate (FBP) into two triose phosphate and plays a key role in glycolysis and gluconeogenesis. In addition, may also function as scaffolding protein. This is Fructose-bisphosphate aldolase A (ALDOA) from Pongo abelii (Sumatran orangutan).